Consider the following 178-residue polypeptide: Beta-lytic metalloendopeptidase (178 aa).

A disulfide bridge links C65 with C111. 2 residues coordinate Zn(2+): H120 and H122. Cysteines 155 and 168 form a disulfide.

This sequence belongs to the peptidase M23A family. Zn(2+) is required as a cofactor.

It carries out the reaction Cleavage of N-acetylmuramoyl-|-Ala, and of the insulin B chain at 23-Gly-|-Phe-24 &gt; 18-Val-|-Cys(SO3H).. In Lysobacter enzymogenes, this protein is Beta-lytic metalloendopeptidase.